The following is a 166-amino-acid chain: Small ribosomal subunit protein uS5 (166 aa).

The 64-residue stretch at 11-74 (LQEKLIAVNR…EKARRNMINV (64 aa)) folds into the S5 DRBM domain.

The protein belongs to the universal ribosomal protein uS5 family. Part of the 30S ribosomal subunit. Contacts proteins S4 and S8.

In terms of biological role, with S4 and S12 plays an important role in translational accuracy. Located at the back of the 30S subunit body where it stabilizes the conformation of the head with respect to the body. In Haemophilus ducreyi (strain 35000HP / ATCC 700724), this protein is Small ribosomal subunit protein uS5.